The primary structure comprises 841 residues: Protein NLP6 (841 aa).

The RWP-RK domain occupies 539–624 (EAKTVKKSER…IDSVQGADGS (86 aa)). Residues 649 to 682 (NCPPTSTSPLSNLQDVKIENRDAEDSAGSSTSRA) are disordered. A compositionally biased stretch (polar residues) spans 651–662 (PPTSTSPLSNLQ). The PB1 domain maps to 741–823 (LVSIKATYRE…NTLRLSVHDV (83 aa)).

It is found in the nucleus. Its function is as follows. Probable transcription factor. The sequence is that of Protein NLP6 (NLP6) from Arabidopsis thaliana (Mouse-ear cress).